Reading from the N-terminus, the 243-residue chain is Pyridoxine 5'-phosphate synthase (243 aa).

Asn9 contacts 3-amino-2-oxopropyl phosphate. Position 11-12 (11-12 (DH)) interacts with 1-deoxy-D-xylulose 5-phosphate. Residue Arg20 participates in 3-amino-2-oxopropyl phosphate binding. His45 acts as the Proton acceptor in catalysis. Residues Arg47 and His52 each contribute to the 1-deoxy-D-xylulose 5-phosphate site. Glu72 serves as the catalytic Proton acceptor. Thr102 is a 1-deoxy-D-xylulose 5-phosphate binding site. Residue His193 is the Proton donor of the active site. Residues Gly194 and 215-216 (GH) each bind 3-amino-2-oxopropyl phosphate.

The protein belongs to the PNP synthase family. Homooctamer; tetramer of dimers.

The protein localises to the cytoplasm. It catalyses the reaction 3-amino-2-oxopropyl phosphate + 1-deoxy-D-xylulose 5-phosphate = pyridoxine 5'-phosphate + phosphate + 2 H2O + H(+). It participates in cofactor biosynthesis; pyridoxine 5'-phosphate biosynthesis; pyridoxine 5'-phosphate from D-erythrose 4-phosphate: step 5/5. Functionally, catalyzes the complicated ring closure reaction between the two acyclic compounds 1-deoxy-D-xylulose-5-phosphate (DXP) and 3-amino-2-oxopropyl phosphate (1-amino-acetone-3-phosphate or AAP) to form pyridoxine 5'-phosphate (PNP) and inorganic phosphate. In Photobacterium profundum (strain SS9), this protein is Pyridoxine 5'-phosphate synthase.